Reading from the N-terminus, the 540-residue chain is 2-isopropylmalate synthase (540 aa).

In terms of domain architecture, Pyruvate carboxyltransferase spans 8-273 (VLIFDTTLRD…FFGRDQDSPT (266 aa)). The Mn(2+) site is built by Asp17, His208, His210, and Asn244. Residues 408-540 (QLQLVQVSCG…AVVLDARPTL (133 aa)) form a regulatory domain region.

This sequence belongs to the alpha-IPM synthase/homocitrate synthase family. LeuA type 1 subfamily. As to quaternary structure, homodimer. Mn(2+) serves as cofactor.

The protein localises to the cytoplasm. It catalyses the reaction 3-methyl-2-oxobutanoate + acetyl-CoA + H2O = (2S)-2-isopropylmalate + CoA + H(+). The protein operates within amino-acid biosynthesis; L-leucine biosynthesis; L-leucine from 3-methyl-2-oxobutanoate: step 1/4. Functionally, catalyzes the condensation of the acetyl group of acetyl-CoA with 3-methyl-2-oxobutanoate (2-ketoisovalerate) to form 3-carboxy-3-hydroxy-4-methylpentanoate (2-isopropylmalate). The sequence is that of 2-isopropylmalate synthase from Parasynechococcus marenigrum (strain WH8102).